A 342-amino-acid polypeptide reads, in one-letter code: tRNA-dihydrouridine(20/20a) synthase (342 aa).

Residues proline 10–valine 12 and glutamine 63 contribute to the FMN site. Cysteine 93 functions as the Proton donor in the catalytic mechanism. FMN is bound by residues lysine 132, histidine 164, asparagine 203–glycine 205, and glycine 225–arginine 226. Positions glutamate 313 to arginine 331 are enriched in basic and acidic residues. Residues glutamate 313–valine 342 form a disordered region.

The protein belongs to the Dus family. DusA subfamily. The cofactor is FMN.

It carries out the reaction 5,6-dihydrouridine(20) in tRNA + NADP(+) = uridine(20) in tRNA + NADPH + H(+). The enzyme catalyses 5,6-dihydrouridine(20) in tRNA + NAD(+) = uridine(20) in tRNA + NADH + H(+). It catalyses the reaction 5,6-dihydrouridine(20a) in tRNA + NADP(+) = uridine(20a) in tRNA + NADPH + H(+). The catalysed reaction is 5,6-dihydrouridine(20a) in tRNA + NAD(+) = uridine(20a) in tRNA + NADH + H(+). Its function is as follows. Catalyzes the synthesis of 5,6-dihydrouridine (D), a modified base found in the D-loop of most tRNAs, via the reduction of the C5-C6 double bond in target uridines. Specifically modifies U20 and U20a in tRNAs. The chain is tRNA-dihydrouridine(20/20a) synthase (dus) from Thermus thermophilus (strain ATCC 27634 / DSM 579 / HB8).